The chain runs to 315 residues: MAVYNLSINCSPRFVHHVYVPHFTCKSNKSLSHVPMRITMSKQHHHSYFASTTADVDAHLKQSITIKPPLSVHEAMYNFIFSTPPNLAPSLCVAACELVGGHQDQAMAAASALRVIHAAIFTHDHLPLTGRPNPTSPEAATHNSYNPNIQLLLPDAIVPFGFELLANSDDLTHNKSDRILRVIVEFTRTFGSRGTIDAQYHEKLASRFDVDSHEAKTVGWGHYPSLKKEGAMHACAAACGAILGEAHEEEVEKLRTFGLYVGMIQGYANRFIMSSTEEKKEADRIIEELTNLARQELKYFDGRNLEPFSTFLFRL.

2 residues coordinate Mg(2+): Asp-124 and Gly-130. Dimethylallyl diphosphate is bound by residues Lys-228, Gln-265, and Lys-280.

It belongs to the FPP/GGPP synthase family. In terms of assembly, part of a heterodimeric geranyl(geranyl)diphosphate synthase. Mg(2+) serves as cofactor. As to expression, mainly expressed in trichomes, and, to a lower extent, in roots, leaves, flowers and stems.

It is found in the plastid. The protein localises to the chloroplast thylakoid membrane. Its subcellular location is the chloroplast. Functionally, heterodimeric geranyl(geranyl)-diphosphate (GPP) synthase small subunit. The small subunit alone is inactive in vitro while the large subunit GGPPS1 catalyzes mainly the production of geranygeranyl-diphosphate in vitro. Upon association of the two subunits, the product profile changes and the production of gerany-diphosphate is strongly increased. In Cannabis sativa (Hemp), this protein is Heterodimeric geranylgeranyl pyrophosphate synthase small subunit 1, chloroplastic.